The primary structure comprises 548 residues: Chaperonin GroEL (548 aa).

ATP is bound by residues T29–P32, K50, D86–T90, G416, and D497.

This sequence belongs to the chaperonin (HSP60) family. In terms of assembly, forms a cylinder of 14 subunits composed of two heptameric rings stacked back-to-back. Interacts with the co-chaperonin GroES.

It is found in the cytoplasm. The catalysed reaction is ATP + H2O + a folded polypeptide = ADP + phosphate + an unfolded polypeptide.. Its function is as follows. Together with its co-chaperonin GroES, plays an essential role in assisting protein folding. The GroEL-GroES system forms a nano-cage that allows encapsulation of the non-native substrate proteins and provides a physical environment optimized to promote and accelerate protein folding. In Neorickettsia sennetsu (strain ATCC VR-367 / Miyayama) (Ehrlichia sennetsu), this protein is Chaperonin GroEL.